A 325-amino-acid polypeptide reads, in one-letter code: Phage-like element PBSX protein XkdQ (325 aa).

This sequence to B.subtilis YqbQ.

The sequence is that of Phage-like element PBSX protein XkdQ (xkdQ) from Bacillus subtilis (strain 168).